Consider the following 316-residue polypeptide: Apolipoprotein E (316 aa).

The first 18 residues, 1-18, serve as a signal peptide directing secretion; sequence MKALWAVLVVTLLAGCLA. A run of 8 repeats spans residues 76-97, 98-119, 120-141, 142-163, 164-185, 186-207, 208-229, and 230-251. Residues 76 to 251 form an 8 X 22 AA approximate tandem repeats region; the sequence is VLMEDTMTEL…RLEEMREQME (176 aa). Met-139 bears the Methionine sulfoxide mark. Ser-143 is modified (phosphoserine). Residues 154–164 form an LDL and other lipoprotein receptors binding region; sequence HLRKLRKRLMR. Residue 158-161 coordinates heparin; it reads LRKR. The tract at residues 206–286 is lipid-binding and lipoprotein association; it reads TANLGAGAGK…GWFEPLVEDM (81 aa). 225–232 lines the heparin pocket; that stretch reads GARIRGRL. A homooligomerization region spans residues 262–316; that stretch reads QQMRLQAEIFQARLKGWFEPLVEDMQRQWANLVEKIQASVAANPIPPSSVPQESP. The specificity for association with VLDL stretch occupies residues 274 to 286; the sequence is RLKGWFEPLVEDM.

This sequence belongs to the apolipoprotein A1/A4/E family. In terms of assembly, homotetramer. May interact with ABCA1; functionally associated with ABCA1 in the biogenesis of HDLs. May interact with APP/A4 amyloid-beta peptide; the interaction is extremely stable in vitro but its physiological significance is unclear. May interact with MAPT. May interact with MAP2. In the cerebrospinal fluid, interacts with secreted SORL1. Interacts with PMEL; this allows the loading of PMEL luminal fragment on ILVs to induce fibril nucleation. APOE exists as multiple glycosylated and sialylated glycoforms within cells and in plasma. The extent of glycosylation and sialylation are tissue and context specific. Post-translationally, glycated in plasma VLDL. In terms of processing, phosphorylated by FAM20C in the extracellular medium.

Its subcellular location is the secreted. It is found in the extracellular space. The protein resides in the extracellular matrix. The protein localises to the extracellular vesicle. It localises to the endosome. Its subcellular location is the multivesicular body. In terms of biological role, APOE is an apolipoprotein, a protein associating with lipid particles, that mainly functions in lipoprotein-mediated lipid transport between organs via the plasma and interstitial fluids. APOE is a core component of plasma lipoproteins and is involved in their production, conversion and clearance. Apolipoproteins are amphipathic molecules that interact both with lipids of the lipoprotein particle core and the aqueous environment of the plasma. As such, APOE associates with chylomicrons, chylomicron remnants, very low density lipoproteins (VLDL) and intermediate density lipoproteins (IDL) but shows a preferential binding to high-density lipoproteins (HDL). It also binds a wide range of cellular receptors including the LDL receptor/LDLR, the LDL receptor-related proteins LRP1, LRP2 and LRP8 and the very low-density lipoprotein receptor/VLDLR that mediate the cellular uptake of the APOE-containing lipoprotein particles. Finally, APOE also has a heparin-binding activity and binds heparan-sulfate proteoglycans on the surface of cells, a property that supports the capture and the receptor-mediated uptake of APOE-containing lipoproteins by cells. A main function of APOE is to mediate lipoprotein clearance through the uptake of chylomicrons, VLDLs, and HDLs by hepatocytes. APOE is also involved in the biosynthesis by the liver of VLDLs as well as their uptake by peripheral tissues ensuring the delivery of triglycerides and energy storage in muscle, heart and adipose tissues. By participating in the lipoprotein-mediated distribution of lipids among tissues, APOE plays a critical role in plasma and tissues lipid homeostasis. APOE is also involved in two steps of reverse cholesterol transport, the HDLs-mediated transport of cholesterol from peripheral tissues to the liver, and thereby plays an important role in cholesterol homeostasis. First, it is functionally associated with ABCA1 in the biogenesis of HDLs in tissues. Second, it is enriched in circulating HDLs and mediates their uptake by hepatocytes. APOE also plays an important role in lipid transport in the central nervous system, regulating neuron survival and sprouting. The sequence is that of Apolipoprotein E (Apoe) from Peromyscus leucopus (White-footed mouse).